Consider the following 202-residue polypeptide: Prohormone-4 (202 aa).

The N-terminal stretch at 1-28 is a signal peptide; the sequence is MVQRLCTSVAALSLALSACVFFPRAVMA. The LDL-receptor class A domain occupies 46-86; sequence ACRPYEPFKCPGDDTCISIQYLCDGAPDCQDGYDEDSRLCT. Disulfide bonds link cysteine 47–cysteine 61, cysteine 55–cysteine 74, and cysteine 68–cysteine 85.

The protein resides in the secreted. The sequence is that of Prohormone-4 from Apis mellifera (Honeybee).